The sequence spans 243 residues: DNA repair protein RecO (243 aa).

The protein belongs to the RecO family.

Involved in DNA repair and RecF pathway recombination. The protein is DNA repair protein RecO of Vibrio parahaemolyticus serotype O3:K6 (strain RIMD 2210633).